The primary structure comprises 288 residues: uncharacterized protein (288 aa).

One can recognise an HTH rpiR-type domain in the interval 5 to 81 (GNVLNKIGSL…LELSIELATK (77 aa)). The H-T-H motif DNA-binding region spans 41-60 (LSEIAKHLQVGEATLVRFCR). The SIS domain occupies 129-269 (VVKVLKKARR…YALLVQGEED (141 aa)).

This is an uncharacterized protein from Haemophilus influenzae (strain ATCC 51907 / DSM 11121 / KW20 / Rd).